The sequence spans 785 residues: Ribosome biogenesis protein BOP1 homolog (785 aa).

The segment covering 1-11 (MTKKLTIKRKV) has biased composition (basic residues). Residues 1 to 160 (MTKKLTIKRK…DSDTSDEEDI (160 aa)) form a disordered region. 3 stretches are compositionally biased toward acidic residues: residues 45-54 (EDSTDDEGID), 61-73 (SSED…DEEG), and 85-102 (SGDD…EDDA). Residues 103-112 (DAKKSSKNND) show a composition bias toward basic and acidic residues. Acidic residues predominate over residues 150–159 (ADSDTSDEED). WD repeat units follow at residues 446-487 (GHTD…RTIE), 489-527 (EDVV…KLLV), 571-613 (THFK…SQIP), 616-654 (KSKG…LIKK), 657-696 (TNSK…KPYQ), 700-739 (LHRN…DLLQ), and 755-785 (REEF…RLFT).

Belongs to the WD repeat BOP1/ERB1 family.

The protein resides in the nucleus. The protein localises to the nucleolus. It localises to the nucleoplasm. Functionally, required for maturation of ribosomal RNAs and formation of the large ribosomal subunit. This is Ribosome biogenesis protein BOP1 homolog from Drosophila persimilis (Fruit fly).